The chain runs to 292 residues: Poly(U)-specific endoribonuclease-A (292 aa).

An EndoU domain is found at L8 to S285. Catalysis depends on residues H162, H178, and K224.

Belongs to the ENDOU family. In terms of assembly, monomer. The cofactor is Mn(2+).

It is found in the nucleus. It carries out the reaction uridylyl-uridylyl-ribonucleotide-RNA = a 3'-end uridylyl-2',3'-cyclophospho-uridine-RNA + a 5'-end dephospho-ribonucleoside-RNA. Its function is as follows. Poly(U)-specific endoribonuclease involved in the processing of intron-encoded box C/D snoRNAs, such as U16 and U86. Releases products that have 2',3'-cyclic phosphate termini at the 3'-end. This chain is Poly(U)-specific endoribonuclease-A (endou-a), found in Xenopus laevis (African clawed frog).